Reading from the N-terminus, the 414-residue chain is Argininosuccinate synthase (414 aa).

12–20 (AYSGGLDTS) serves as a coordination point for ATP. L-citrulline is bound by residues Tyr90 and Ser95. Position 120 (Gly120) interacts with ATP. L-aspartate is bound by residues Thr122, Asn126, and Asp127. Asn126 serves as a coordination point for L-citrulline. Residues Arg130, Ser179, Ser188, Glu264, and Tyr276 each coordinate L-citrulline.

The protein belongs to the argininosuccinate synthase family. Type 1 subfamily. As to quaternary structure, homotetramer.

The protein resides in the cytoplasm. It carries out the reaction L-citrulline + L-aspartate + ATP = 2-(N(omega)-L-arginino)succinate + AMP + diphosphate + H(+). Its pathway is amino-acid biosynthesis; L-arginine biosynthesis; L-arginine from L-ornithine and carbamoyl phosphate: step 2/3. The protein is Argininosuccinate synthase of Alkaliphilus metalliredigens (strain QYMF).